Reading from the N-terminus, the 158-residue chain is Succinate dehydrogenase assembly factor 2, mitochondrial (158 aa).

The transit peptide at 1–17 (MFSANIARKVVCSVCRA) directs the protein to the mitochondrion.

This sequence belongs to the SDHAF2 family. In terms of assembly, interacts with sdha within the SDH catalytic dimer.

Its subcellular location is the mitochondrion matrix. Functionally, plays an essential role in the assembly of succinate dehydrogenase (SDH), an enzyme complex (also referred to as respiratory complex II) that is a component of both the tricarboxylic acid (TCA) cycle and the mitochondrial electron transport chain, and which couples the oxidation of succinate to fumarate with the reduction of ubiquinone (coenzyme Q) to ubiquinol. Required for flavinylation (covalent attachment of FAD) of the flavoprotein subunit sdha of the SDH catalytic dimer. This Danio rerio (Zebrafish) protein is Succinate dehydrogenase assembly factor 2, mitochondrial.